The primary structure comprises 83 residues: Exodeoxyribonuclease 7 small subunit (83 aa).

This sequence belongs to the XseB family. In terms of assembly, heterooligomer composed of large and small subunits.

It is found in the cytoplasm. The catalysed reaction is Exonucleolytic cleavage in either 5'- to 3'- or 3'- to 5'-direction to yield nucleoside 5'-phosphates.. Its function is as follows. Bidirectionally degrades single-stranded DNA into large acid-insoluble oligonucleotides, which are then degraded further into small acid-soluble oligonucleotides. This is Exodeoxyribonuclease 7 small subunit from Rhodopseudomonas palustris (strain BisB5).